We begin with the raw amino-acid sequence, 177 residues long: Large ribosomal subunit protein uL6 (177 aa).

It belongs to the universal ribosomal protein uL6 family. As to quaternary structure, part of the 50S ribosomal subunit.

Its function is as follows. This protein binds to the 23S rRNA, and is important in its secondary structure. It is located near the subunit interface in the base of the L7/L12 stalk, and near the tRNA binding site of the peptidyltransferase center. The chain is Large ribosomal subunit protein uL6 from Methylorubrum populi (strain ATCC BAA-705 / NCIMB 13946 / BJ001) (Methylobacterium populi).